We begin with the raw amino-acid sequence, 104 residues long: Protein SMALL AUXIN UP-REGULATED RNA 12 (104 aa).

The protein belongs to the ARG7 family. Expressed in flowers and etiolated hypocotyls.

It is found in the cell membrane. Functionally, provide a mechanistic link between auxin and plasma membrane H(+)-ATPases (PM H(+)-ATPases, e.g. AHA1 and AHA2), and triggers PM H(+)-ATPases activity by promoting phosphorylation of their C-terminal autoinhibitory domain as a result of PP2C-D subfamily of type 2C phosphatases inhibition, thus leading to the acidification of the apoplast and the facilitation of solutes and water uptake to drive cell expansion. Triggers plant growth probably by promoting cell elongation. Regulates branch angles and bending. In Arabidopsis thaliana (Mouse-ear cress), this protein is Protein SMALL AUXIN UP-REGULATED RNA 12.